A 589-amino-acid chain; its full sequence is Aspartate--tRNA(Asp/Asn) ligase (589 aa).

Position 170 (glutamate 170) interacts with L-aspartate. Positions glutamine 194–lysine 197 are aspartate. Position 216 (arginine 216) interacts with L-aspartate. ATP is bound by residues arginine 216 to glutamate 218 and glutamine 225. Histidine 448 serves as a coordination point for L-aspartate. Glutamate 482 contacts ATP. Arginine 489 is an L-aspartate binding site. Glycine 534–arginine 537 lines the ATP pocket. The segment at proline 563–glutamate 589 is disordered. The segment covering glutamine 575–glutamate 589 has biased composition (basic and acidic residues).

This sequence belongs to the class-II aminoacyl-tRNA synthetase family. Type 1 subfamily. As to quaternary structure, homodimer.

It is found in the cytoplasm. The enzyme catalyses tRNA(Asx) + L-aspartate + ATP = L-aspartyl-tRNA(Asx) + AMP + diphosphate. Functionally, aspartyl-tRNA synthetase with relaxed tRNA specificity since it is able to aspartylate not only its cognate tRNA(Asp) but also tRNA(Asn). Reaction proceeds in two steps: L-aspartate is first activated by ATP to form Asp-AMP and then transferred to the acceptor end of tRNA(Asp/Asn). The sequence is that of Aspartate--tRNA(Asp/Asn) ligase from Mycobacterium leprae (strain Br4923).